We begin with the raw amino-acid sequence, 222 residues long: MVHVVMMVFLLIVLILCSSTVGYDYFQFTQQYQLAVCNSNRTLCKDPPDKLFTVHGLWPSNMVGPDPSKCPIKNIRKREKLLEHQLEIIWPNVFDRTKNNLFWDKEWMKHGSCGYPTIDNENHYFETVIKMYISKKQNVSRILSKAKIEPDGKKRALLDIENAIRNGADNKKPKLKCQKKGTTTELVEITLCSDKSGEHFIDCPHPFEPISPHYCPTNNIKY.

The N-terminal stretch at 1-22 is a signal peptide; the sequence is MVHVVMMVFLLIVLILCSSTVG. RNA is bound at residue glutamine 31. Cysteine 37 and cysteine 44 are joined by a disulfide. Residue asparagine 40 is glycosylated (N-linked (GlcNAc...) asparagine). RNA-binding positions include histidine 55, 92 to 93, phenylalanine 102, 105 to 106, and 109 to 110; these read NV, KE, and KH. Residue histidine 55 is the Proton donor of the active site. Cysteine 70 and cysteine 113 are disulfide-bonded. Active-site residues include glutamate 106 and lysine 109. Histidine 110 serves as the catalytic Proton acceptor. N-linked (GlcNAc...) asparagine glycosylation occurs at asparagine 138. Intrachain disulfides connect cysteine 177-cysteine 215 and cysteine 192-cysteine 203.

It belongs to the RNase T2 family. N-linked core structure at Asn-138 contains xylose.

It carries out the reaction a ribonucleotidyl-ribonucleotide-RNA + H2O = a 3'-end 3'-phospho-ribonucleotide-RNA + a 5'-end dephospho-ribonucleoside-RNA + H(+). Its function is as follows. Self-incompatibility (SI) is the inherited ability of a flowering plant to prevent self-fertilization by discriminating between self and non-self pollen during pollination. In many species, self-incompatibility is controlled by the single, multiallelic locus S. The chain is Ribonuclease S-3 from Pyrus pyrifolia (Chinese pear).